A 272-amino-acid polypeptide reads, in one-letter code: PILR alpha-associated neural protein (272 aa).

An N-terminal signal peptide occupies residues 1-27 (MWPAQLLSQLLPLWPLLLLPLSLPAQG). Positions 25–93 (AQGSSHRSPP…PSGFEEGPPS (69 aa)) are disordered. Residues 28–174 (SSHRSPPAPA…FGGRGEGVDP (147 aa)) lie on the Extracellular side of the membrane. Thr-136 carries O-linked (GalNAc...) threonine glycosylation. The helical transmembrane segment at 175 to 195 (QLYVTITISIIIVLVATGIIF) threads the bilayer. The Cytoplasmic segment spans residues 196-272 (KFCWDRSQKR…KGAPAFQLNR (77 aa)). The disordered stretch occupies residues 205 to 272 (RRRPSGQQGA…KGAPAFQLNR (68 aa)). Over residues 209-225 (SGQQGALRQEESQQPLT) the composition is skewed to polar residues.

O-glycosylation at Thr-136 is essential for recognition by PILRA.

The protein resides in the membrane. Acts as a ligand for PILRA in neuronal tissues, where it may be involved in immune regulation. The polypeptide is PILR alpha-associated neural protein (Pianp) (Rattus norvegicus (Rat)).